A 735-amino-acid chain; its full sequence is ATP-dependent DNA helicase Hel308 (735 aa).

Residues glutamine 32 and 50-57 (APTGSGKT) contribute to the ATP site. The Helicase ATP-binding domain maps to 37–201 (QAGVEKGENL…WIGGKIVESS (165 aa)). The short motif at 146–149 (DEIH) is the DEAH box element. In terms of domain architecture, Helicase C-terminal spans 235-431 (DLDLAAEAIE…GLRGLRHFIL (197 aa)).

This sequence belongs to the helicase family. Hel308 subfamily. Monomer.

The catalysed reaction is Couples ATP hydrolysis with the unwinding of duplex DNA by translocating in the 3'-5' direction.. The enzyme catalyses ATP + H2O = ADP + phosphate + H(+). Its function is as follows. DNA-dependent ATPase and 3'-5' DNA helicase that may be involved in repair of stalled replication forks. The sequence is that of ATP-dependent DNA helicase Hel308 from Aeropyrum pernix (strain ATCC 700893 / DSM 11879 / JCM 9820 / NBRC 100138 / K1).